A 449-amino-acid chain; its full sequence is XK-related protein 2 (449 aa).

10 helical membrane-spanning segments follow: residues 35 to 55 (FSIL…LYMV), 68 to 88 (TYTF…LIFV), 98 to 118 (LSLF…EAMI), 174 to 194 (IQAF…SLIS), 202 to 222 (VVLM…CNML), 241 to 261 (LCIT…LVLF), 269 to 289 (AVPF…IKFW), 306 to 326 (VGTL…NFSC), 357 to 377 (LVEN…VLLN), and 382 to 402 (LIAL…LLFF).

Belongs to the XK family. In terms of tissue distribution, expressed predominantly in the placenta, in syncytiotrophoblasts. Moderate levels in the adrenal gland, low levels in the trachea and very low levels in the bone marrow.

The protein resides in the cell membrane. The chain is XK-related protein 2 (XKRX) from Homo sapiens (Human).